The following is a 1039-amino-acid chain: uncharacterized protein (1039 aa).

Over residues 1–19 (MSLLMAHRKSKSSQRKLRN) the composition is skewed to basic residues. The disordered stretch occupies residues 1–38 (MSLLMAHRKSKSSQRKLRNRSSSLTPQKRRIRASKGSH).

This is an uncharacterized protein from Sinorhizobium fredii (strain NBRC 101917 / NGR234).